Here is a 282-residue protein sequence, read N- to C-terminus: Bifunctional protein FolD (282 aa).

Residues 164-166, I189, and I230 each bind NADP(+); that span reads GAS.

Belongs to the tetrahydrofolate dehydrogenase/cyclohydrolase family. Homodimer.

It catalyses the reaction (6R)-5,10-methylene-5,6,7,8-tetrahydrofolate + NADP(+) = (6R)-5,10-methenyltetrahydrofolate + NADPH. The catalysed reaction is (6R)-5,10-methenyltetrahydrofolate + H2O = (6R)-10-formyltetrahydrofolate + H(+). The protein operates within one-carbon metabolism; tetrahydrofolate interconversion. Functionally, catalyzes the oxidation of 5,10-methylenetetrahydrofolate to 5,10-methenyltetrahydrofolate and then the hydrolysis of 5,10-methenyltetrahydrofolate to 10-formyltetrahydrofolate. This Campylobacter jejuni (strain RM1221) protein is Bifunctional protein FolD.